The primary structure comprises 689 residues: Glycine--tRNA ligase beta subunit (689 aa).

The protein belongs to the class-II aminoacyl-tRNA synthetase family. Tetramer of two alpha and two beta subunits.

The protein resides in the cytoplasm. The catalysed reaction is tRNA(Gly) + glycine + ATP = glycyl-tRNA(Gly) + AMP + diphosphate. The protein is Glycine--tRNA ligase beta subunit of Lacticaseibacillus paracasei (strain ATCC 334 / BCRC 17002 / CCUG 31169 / CIP 107868 / KCTC 3260 / NRRL B-441) (Lactobacillus paracasei).